The chain runs to 217 residues: Small ribosomal subunit protein uS3 (217 aa).

The region spanning 40-110 (IRDLINKGFN…EVYINIHEVR (71 aa)) is the KH type-2 domain.

Belongs to the universal ribosomal protein uS3 family. As to quaternary structure, part of the 30S ribosomal subunit. Forms a tight complex with proteins S10 and S14.

In terms of biological role, binds the lower part of the 30S subunit head. Binds mRNA in the 70S ribosome, positioning it for translation. The polypeptide is Small ribosomal subunit protein uS3 (Rickettsia akari (strain Hartford)).